An 887-amino-acid polypeptide reads, in one-letter code: Oxysterol-binding protein-related protein 3 (887 aa).

A disordered region spans residues 1–35 (MMSDEKNLGVSQKLVSPSRSTSSCSSKQGSRQDSW). Phosphoserine occurs at positions 16 and 34. Residues 16–32 (SPSRSTSSCSSKQGSRQ) are compositionally biased toward low complexity. In terms of domain architecture, PH spans 51–146 (PPVQKGFLLK…WVSKLRHHRM (96 aa)). The short motif at 161–167 (HFFSGST) is the FFAT 1 element. 3 positions are modified to phosphoserine: serine 200, serine 251, and serine 265. Positions 261–326 (GSFESPKKEK…KNYSDGSETS (66 aa)) are disordered. Positions 268–280 (KEKRSHRRWRSRA) are enriched in basic residues. A phosphoserine mark is found at serine 304, serine 309, serine 320, serine 323, serine 371, serine 372, serine 410, serine 425, serine 437, and serine 440. The FFAT 2 signature appears at 450 to 454 (EFFDA).

This sequence belongs to the OSBP family. Homodimer. Interacts with RRAS. Interacts (phosphorylated form) with VAPA. Interacts with OSBPL6. Post-translationally, phosphorylation is enhanced in vitro by phorbol-12-myristate-13-acetate (PMA), forskolin and calcium ionophore A23187. Phosphorylation seems to be stimulated in conditions of low cell-cell (or cell-matrix) adhesion. Expressed in a subset of small lymphocytes (at protein level). Expressed at high concentration in kidney, lymph node and thymus. Expressed at moderate concentration in stomach, jejunum, ileum, appendix, spleen, leukocytes, trachea, lung and thyroid gland. Expressed at low concentration in whole brain, esophagus, duodenum, ileocecum, colon, skeletal muscle, bone marrow, placenta and mammary gland. Isoform 1a, isoform 1b, isoform 1c and isoform 1d are highly expressed in brain, bone marrow, colon, kidney, lung, skeletal muscle, spleen, thymus and thyroid. Not expressed in heart and liver. Isoform 2a, isoform 2b, isoform 2c and isoform 2d are expressed in brain, bone marrow, kidney, skeletal muscle, spleen, thymus and thyroid. Not expressed in heart, liver and lung.

It is found in the endoplasmic reticulum membrane. Its subcellular location is the cytoplasm. The protein resides in the cytosol. The protein localises to the cell membrane. It localises to the cell projection. It is found in the filopodium tip. Its subcellular location is the nucleus membrane. Its function is as follows. Phosphoinositide-binding protein which associates with both cell and endoplasmic reticulum (ER) membranes. Can bind to the ER membrane protein VAPA and recruit VAPA to plasma membrane sites, thus linking these intracellular compartments. The ORP3-VAPA complex stimulates RRAS signaling which in turn attenuates integrin beta-1 (ITGB1) activation at the cell surface. With VAPA, may regulate ER morphology. Has a role in regulation of the actin cytoskeleton, cell polarity and cell adhesion. Binds to phosphoinositides with preference for PI(3,4)P2 and PI(3,4,5)P3. Also binds 25-hydroxycholesterol and cholesterol. This is Oxysterol-binding protein-related protein 3 (OSBPL3) from Homo sapiens (Human).